Here is a 392-residue protein sequence, read N- to C-terminus: Formate-dependent phosphoribosylglycinamide formyltransferase (392 aa).

Residues 22 to 23 (EL) and Glu-82 each bind N(1)-(5-phospho-beta-D-ribosyl)glycinamide. ATP contacts are provided by residues Arg-114, Lys-155, 160–165 (SSGKGQ), 195–198 (EGVV), and Glu-203. One can recognise an ATP-grasp domain in the interval 119 to 308 (RLAAEELQLP…EFALHVRAFL (190 aa)). Residues Glu-267 and Glu-279 each coordinate Mg(2+). Residues Asp-286, Lys-355, and 362-363 (RR) each bind N(1)-(5-phospho-beta-D-ribosyl)glycinamide.

Belongs to the PurK/PurT family. As to quaternary structure, homodimer.

It catalyses the reaction N(1)-(5-phospho-beta-D-ribosyl)glycinamide + formate + ATP = N(2)-formyl-N(1)-(5-phospho-beta-D-ribosyl)glycinamide + ADP + phosphate + H(+). The protein operates within purine metabolism; IMP biosynthesis via de novo pathway; N(2)-formyl-N(1)-(5-phospho-D-ribosyl)glycinamide from N(1)-(5-phospho-D-ribosyl)glycinamide (formate route): step 1/1. In terms of biological role, involved in the de novo purine biosynthesis. Catalyzes the transfer of formate to 5-phospho-ribosyl-glycinamide (GAR), producing 5-phospho-ribosyl-N-formylglycinamide (FGAR). Formate is provided by PurU via hydrolysis of 10-formyl-tetrahydrofolate. This Shigella boydii serotype 4 (strain Sb227) protein is Formate-dependent phosphoribosylglycinamide formyltransferase.